The chain runs to 559 residues: MDIDDIKHNRRVVSNISSLLDNDILCDVIITIGDGEEIKAHKTILAAGSKYFRTLFTTPMIIRDLVTRVNLQMFDKDAVKNIVQYLYNRHISSMNVIDVLKCADYLLIDDLVTDCESYVKDYTNHDTCIYIYHRLYEMSHIPIVKYVKRMVMRNIPTLITTDAFKNAVFEILLDIISTNDGEYVYREGYKVTILLKWLDYNYITEEQLLCILSCIDIQNLDKKSRLLLYSNTTINMYSSCVKFLLDNKQNRNIIPRQLCLVYHDTNYNISNPCILVYNINTMEYNTIYTIHNNIINYSSAVVDNEIIIAGGYNFNNISLNKVYKINIEHRTCVELPPMIKNRCHFSLAVIDDMIYAIGGQNGTIVERSVECYTMGDDTWKMLPDMPDAISSYGMCVFDQYIYIIGGRTEHVKYIPVQHMNEIVDINEHSSDKVIRYDTVNNIWEKLPNLCSGTIRPSVVSHKDDIYVVCDIKDDEINGFKTCIFRYNTKDNYKGWELITTIDSKLTVLHTILHDDAITILHWYESCMIQDKFNIDTYKWTNICYQRSNSYIVHDTLPIY.

A BTB domain is found at 26–95 (CDVIITIGDG…LYNRHISSMN (70 aa)). One can recognise a BACK domain in the interval 128–223 (CIYIYHRLYE…CIDIQNLDKK (96 aa)). Kelch repeat units lie at residues 305–352 (EIII…VIDD), 353–399 (MIYA…VFDQ), and 401–463 (IYII…SHKD).

In terms of assembly, interacts (via BTB domain) with host CUL3.

Its subcellular location is the host cytoplasm. In terms of biological role, probable substrate-specific adapter of CUL3-containing E3 ubiquitin-protein ligases which mediate the ubiquitination and subsequent proteasomal degradation of host target proteins. The polypeptide is Kelch repeat and BTB domain-containing protein 2 (KBTB2) (Mus musculus (Mouse)).